Reading from the N-terminus, the 329-residue chain is Taste receptor type 2 member 134 (329 aa).

Over 1-27 (MRCSLRGCVQGRGGKSGVSLSKFSPKK) the chain is Extracellular. Residues 28–48 (MSFFFIFMVIFCIQSLVALLQ) traverse the membrane as a helical segment. The Cytoplasmic segment spans residues 49–68 (NGFLATVLGREWVRSQGLPA). A helical membrane pass occupies residues 69–89 (GDMIVACLAASRFCLHGVAIV). Over 90–121 (NNFLTFVKLWSQKIYFSVLWDFVNTVNFWCTT) the chain is Extracellular. Residues 122-142 (WLAIFYCVKISSFSHPIFFWI) form a helical membrane-spanning segment. At 143–153 (KWRISRSVPRL) the chain is on the cytoplasmic side. A helical membrane pass occupies residues 154–174 (LLGSLVIGGLSAVSSATGNTI). The Extracellular portion of the chain corresponds to 175 to 201 (AFQMTACENYTLAYRTRAFYAYYFRCH). An N-linked (GlcNAc...) asparagine glycan is attached at N183. A helical membrane pass occupies residues 202–222 (AMLMWIIPFFLFLLSVILLMF). Topologically, residues 223–251 (SLYRHLEHMRYRRPWSHDYSTQAHTMALK) are cytoplasmic. The chain crosses the membrane as a helical span at residues 252-272 (SLAFFLVFYTSYVLFLVISVT). At 273–282 (RVVNVHSSWH) the chain is on the extracellular side. Residues 283–303 (WAWEVITYMGILLHSTILTLS) form a helical membrane-spanning segment. Topologically, residues 304–329 (NPKMRKALKIKFPDLCVARSQDKRRG) are cytoplasmic.

This sequence belongs to the G-protein coupled receptor T2R family. As to expression, expressed in tongue and gastrointestinal tract.

The protein localises to the membrane. In terms of biological role, putative taste receptor which may play a role in the perception of bitterness. The chain is Taste receptor type 2 member 134 from Rattus norvegicus (Rat).